Reading from the N-terminus, the 3010-residue chain is Genome polyprotein (3010 aa).

At Ser-2 the chain carries N-acetylserine; by host. The interaction with STAT1 stretch occupies residues 2 to 23 (STNPKPQRKTKRNTNRRPQDVK). The tract at residues 2 to 58 (STNPKPQRKTKRNTNRRPQDVKFPGGGQIVGGVYLLPRRGPRLGVRATRKTSERSQP) is interaction with EIF2AK2/PKR. The segment at 2-59 (STNPKPQRKTKRNTNRRPQDVKFPGGGQIVGGVYLLPRRGPRLGVRATRKTSERSQPR) is interaction with DDX3X. Residues 2–75 (STNPKPQRKT…PKARQPEGRA (74 aa)) form a disordered region. Topologically, residues 2–168 (STNPKPQRKT…EDGVNYATGN (167 aa)) are cytoplasmic. 2 short sequence motifs (nuclear localization signal) span residues 5–13 (PKPQRKTKR) and 38–43 (PRRGPR). Positions 7–16 (PQRKTKRNTN) are enriched in basic residues. Positions 32 to 47 (GGVYLLPRRGPRLGVR) are enriched in low complexity. Ser-53 carries the phosphoserine; by host modification. Short sequence motifs (nuclear localization signal) lie at residues 58–64 (PRGRRQP) and 66–71 (PKARQP). Ser-99 bears the Phosphoserine; by host mark. The tract at residues 112-152 (PRRRSRNLGKVIDTLTCGFADLMGYIPLVGAPLGGAARALA) is important for endoplasmic reticulum and mitochondrial localization. Residue Ser-116 is modified to Phosphoserine; by host PKA. The interaction with APOA2 stretch occupies residues 122–173 (VIDTLTCGFADLMGYIPLVGAPLGGAARALAHGVRVLEDGVNYATGNLPGCS). Residues 164-167 (YATG) form an important for lipid droplets localization region. The helical transmembrane segment at 169–189 (LPGCSFSIFLLALLSCLTIPA) threads the bilayer. Residues 178-191 (LLALLSCLTIPASA) constitute a propeptide, ER anchor for the core protein, removed in mature form by host signal peptidase. Over 190 to 358 (SAYEVRNVSG…AGAHWGVLAG (169 aa)) the chain is Lumenal. N-linked (GlcNAc...) asparagine; by host glycosylation is found at Asn-196, Asn-209, Asn-234, and Asn-250. The segment at 265 to 296 (LVGAAALCSAMYVGDLCGSVFLVAQLFTFSPR) is important for fusion. Asn-305 carries an N-linked (GlcNAc...) asparagine; by host glycan. The chain crosses the membrane as a helical span at residues 359–379 (LAYYSMVGNWAKVLIVMLLFA). Over 380–725 (GVDGGTYVTG…WEYVLLLFLL (346 aa)) the chain is Lumenal. Positions 385-411 (TYVTGGTMAKNTLGITSLFSPGSSQKI) are HVR1. Residue Asn-417 is glycosylated (N-linked (GlcNAc...) asparagine; by host). N-linked (GlcNAc...) (high mannose) asparagine; by host glycans are attached at residues Asn-423, Asn-430, and Asn-448. Cystine bridges form between Cys-429-Cys-552, Cys-452-Cys-459, Cys-486-Cys-494, and Cys-503-Cys-508. The segment at 474–482 (YNESHSSDQ) is HVR2. The tract at residues 480–493 (SDQRPYCWHYAPRP) is CD81-binding 1. Asn-532 is a glycosylation site (N-linked (GlcNAc...) (high mannose) asparagine; by host). Positions 544-551 (PPQGNWFG) are CD81-binding 2. An N-linked (GlcNAc...) (high mannose) asparagine; by host glycan is attached at Asn-556. A disulfide bond links Cys-564 and Cys-569. An N-linked (GlcNAc...) (high mannose) asparagine; by host glycan is attached at Asn-576. Intrachain disulfides connect Cys-581/Cys-585, Cys-597/Cys-620, and Cys-607/Cys-644. Asn-623 and Asn-645 each carry an N-linked (GlcNAc...) (high mannose) asparagine; by host glycan. The cysteines at positions 652 and 677 are disulfide-linked. Residues 660–671 (SELSPLLLSTTE) are EIF2AK2/eIF2-alpha phosphorylation homology domain (PePHD). The chain crosses the membrane as a helical span at residues 726–746 (LADARVCACLWMMLLIAQAEA). At 747-757 (ALENLVVLNAA) the chain is on the lumenal side. The helical transmembrane segment at 758-778 (SVAGAHGILSFLVFFCAAWYI) threads the bilayer. The Cytoplasmic portion of the chain corresponds to 779–781 (KGR). The chain crosses the membrane as a helical span at residues 782 to 803 (LVPGAAYALYGVWPLLLLLLAL). Over 804 to 813 (PPRAYAMDRE) the chain is Lumenal. A helical membrane pass occupies residues 814-834 (MAASCGGAVFVGLILLTLSPH). At 835-838 (YKLF) the chain is on the cytoplasmic side. The helical transmembrane segment at 839 to 859 (LARLIWWLQYFITRAEAHLQV) threads the bilayer. The Lumenal segment spans residues 860-881 (WIPPLNVRGGRDAVILLTCAIH). A helical transmembrane segment spans residues 882–902 (PELIFTITKILLAILGPLMVL). Residues 903 to 1026 (QAGITKVPYF…SLEGQGWRLL (124 aa)) form the Peptidase C18 domain. Residues 903-1657 (QAGITKVPYF…CMSADLEVVT (755 aa)) are Cytoplasmic-facing. The tract at residues 904–1206 (AGITKVPYFV…PVESMETTMR (303 aa)) is protease NS2-3. Residue Cys-922 is the site of S-palmitoyl cysteine; by host attachment. The tract at residues 929-949 (AGGHYVQMALMKLAALTGTYV) is interaction with host SCPS1. Residues His-952, Glu-972, and Cys-993 each act as for protease NS2 activity; shared with dimeric partner in the active site. In terms of domain architecture, Peptidase S29 spans 1027-1208 (APITAYSQQT…ESMETTMRSP (182 aa)). Active-site charge relay system; for serine protease NS3 activity residues include His-1083 and Asp-1107. Zn(2+) contacts are provided by Cys-1123 and Cys-1125. Ser-1165 serves as the catalytic Charge relay system; for serine protease NS3 activity. Residues Cys-1171 and His-1175 each coordinate Zn(2+). Positions 1217 to 1369 (PAVPQTFQVA…PNIEEVALSS (153 aa)) constitute a Helicase ATP-binding domain. 1230 to 1237 (APTGSGKS) is a binding site for ATP. Mg(2+)-binding residues include Ser-1237 and Glu-1317. The short motif at 1316–1319 (DECH) is the DECH box element. The RNA-binding stretch occupies residues 1486 to 1497 (QRRGRTGRGRMG). The helical transmembrane segment at 1658-1678 (STWVLVGGVLAALAAYCLTTG) threads the bilayer. Residues 1679–1690 (SVVIVGRIILSG) are NS3-binding. Topologically, residues 1679-1805 (SVVIVGRIIL…SITSPLTTQH (127 aa)) are cytoplasmic. A helical membrane pass occupies residues 1806–1826 (TLLFNILGGWVAAQLAPPSAA). The Lumenal segment spans residues 1827 to 1828 (SA). A helical membrane pass occupies residues 1829-1849 (FVGAGIAGAAVGSIGLGKVLV). A glycine zipper region spans residues 1833 to 1861 (GIAGAAVGSIGLGKVLVDILAGYGAGVAG). Asp-1850 is a topological domain (cytoplasmic). Residues 1851-1871 (ILAGYGAGVAGALVAFKVMSG) form a helical membrane-spanning segment. At 1872-1881 (EMPSTEDLVN) the chain is on the lumenal side. A helical membrane pass occupies residues 1882 to 1902 (LLPAILSPGALVVGVVCAAIL). Residues 1903–1972 (RRHVGPGEGA…WINEDCSTPC (70 aa)) are Cytoplasmic-facing. S-palmitoyl cysteine; by host attachment occurs at residues Cys-1968 and Cys-1972. The stretch at 1973–2003 (SGSWLRDVWDWICTVLTDFKTWLQSKLLPRL) is an intramembrane region. The segment at 1978 to 1998 (RDVWDWICTVLTDFKTWLQSK) is membrane-binding. Over 2004–2989 (PGVPFFSCQR…YHSLSRARPR (986 aa)) the chain is Cytoplasmic. The interval 2005 to 2221 (GVPFFSCQRG…KATCTTRHDS (217 aa)) is RNA-binding. The Zn(2+) site is built by Cys-2011, Cys-2029, Cys-2031, and Cys-2052. The segment at 2120–2208 (EFFTEVDGVR…ASSSASQLSA (89 aa)) is FKBP8-binding. The segment at 2120–2332 (EFFTEVDGVR…PIPPPRRKRT (213 aa)) is transcriptional activation. The tract at residues 2135 to 2139 (PACKP) is interaction with non-structural protein 4A. The interval 2187–2219 (KRRLARGSPPSLASSSASQLSAPSLKATCTTRH) is disordered. An interaction with host SKP2 region spans residues 2189 to 2441 (RLARGSPPSL…PCAAEETKLP (253 aa)). A Phosphoserine; by host; in p56 modification is found at Ser-2194. Low complexity predominate over residues 2194-2211 (SPPSLASSSASQLSAPSL). A Phosphoserine; by host; in p58 modification is found at Ser-2197. Ser-2201 is subject to Phosphoserine; by host; in p56 and p58, regulates intracellular NS5A distribution. A phosphoserine; by host; in p58 mark is found at Ser-2204, Ser-2207, and Ser-2210. 2 ISDR regions span residues 2206–2245 (LSAPSLKATCTTRHDSPDADLIEANLLWRQEMGGNITRVE) and 2210–2249 (SLKATCTTRHDSPDADLIEANLLWRQEMGGNITRVESENK). Residues 2210-2275 (SLKATCTTRH…REVSVPAEIL (66 aa)) are EIF2AK2/PKR-binding. The segment at 2249–2306 (KVVILDSFEPLQAEEDEREVSVPAEILRRSRKFPRAMPIWARPDYNPPLLESWKDPDY) is NS4B-binding. Positions 2322–2325 (PPIP) match the SH3-binding motif. The short motif at 2326-2334 (PPRRKRTVV) is the Nuclear localization signal element. The tract at residues 2332 to 2441 (TVVLSESTVS…PCAAEETKLP (110 aa)) is interaction with host IFI27. Residue Lys-2350 forms a Glycyl lysine isopeptide (Lys-Gly) (interchain with G-Cter in ubiquitin) linkage. Polar residues predominate over residues 2351–2371 (TFGSSESSAVDSGTATASPDQ). The disordered stretch occupies residues 2351–2407 (TFGSSESSAVDSGTATASPDQPSDDGDAGSDVESYSSMPPLEGEPGDPDLSDGSWST). The tract at residues 2354 to 2377 (SSESSAVDSGTATASPDQPSDDGD) is V3. Phosphoserine; by host occurs at positions 2448 and 2461. In terms of domain architecture, RdRp catalytic spans 2633 to 2751 (PMGFAYDTRC…ICESAGTQED (119 aa)). 3 residues coordinate Mg(2+): Asp-2639, Asp-2737, and Asp-2738. The helical transmembrane segment at 2990 to 3010 (WFMWCLLLLSVGVGIYLLPNR) threads the bilayer.

Belongs to the hepacivirus polyprotein family. In terms of assembly, homooligomer. Interacts with E1 (via C-terminus). Interacts with the non-structural protein 5A. Interacts (via N-terminus) with host STAT1 (via SH2 domain); this interaction results in decreased STAT1 phosphorylation and ubiquitin-mediated proteasome-dependent STAT1 degradation, leading to decreased IFN-stimulated gene transcription. Interacts with host STAT3; this interaction constitutively activates STAT3. Interacts with host LTBR receptor. Interacts with host TNFRSF1A receptor and possibly induces apoptosis. Interacts with host HNRPK. Interacts with host YWHAE. Interacts with host UBE3A/E6AP. Interacts with host DDX3X. Interacts with host APOA2. Interacts with host RXRA protein. Interacts with host SP110 isoform 3/Sp110b; this interaction sequesters the transcriptional corepressor SP110 away from the nucleus. Interacts with host CREB3 nuclear transcription protein; this interaction triggers cell transformation. Interacts with host ACY3. Interacts with host C1QR1. Interacts with host RBM24; this interaction, which enhances the interaction of the mature core protein with 5'-UTR, may inhibit viral translation and favor replication. Interacts with host EIF2AK2/PKR; this interaction induces the autophosphorylation of EIF2AK2. Part of the viral assembly initiation complex composed of NS2, E1, E2, NS3, NS4A, NS5A and the mature core protein. As to quaternary structure, forms a heterodimer with envelope glycoprotein E2. Interacts with mature core protein. Interacts with protease NS2. The heterodimer E1/E2 interacts with host CLDN1; this interaction plays a role in viral entry into host cell. Interacts with host SPSB2 (via C-terminus). Part of the viral assembly initiation complex composed of NS2, E1, E2, NS3, NS4A, NS5A and the mature core protein. Interacts with human PLSCR1. Interacts with host NEURL3; this interaction prevents E1 binding to glycoprotein E2. Forms a heterodimer with envelope glycoprotein E1. Interacts with host CD81 and SCARB1 receptors; these interactions play a role in viral entry into host cell. Interacts with host EIF2AK2/PKR; this interaction inhibits EIF2AK2 and probably allows the virus to evade the innate immune response. Interacts with host CD209/DC-SIGN and CLEC4M/DC-SIGNR. Interact with host SPCS1; this interaction is essential for viral particle assembly. Interacts with protease NS2. The heterodimer E1/E2 interacts with host CLDN1; this interaction plays a role in viral entry into host cell. Part of the viral assembly initiation complex composed of NS2, E1, E2, NS3, NS4A, NS5A and the mature core protein. Interacts with host SLC3A2/4F2hc; the interaction may facilitate viral entry into host cell. Interacts with human PLSCR1. In terms of assembly, homohexamer. Homoheptamer. Interacts with protease NS2. As to quaternary structure, homodimer. Interacts with host SPCS1; this interaction is essential for viral particle assembly. Interacts with envelope glycoprotein E1. Interacts with envelope glycoprotein E2. Interacts with viroporin p7. Interacts with serine protease/helicase NS3. Part of the replication complex composed of NS2, NS3, NS4A, NS4B, NS5A and the RNA-directed RNA polymerase embedded in an ER-derived membranous web. Part of the viral assembly initiation complex composed of NS2, E1, E2, NS3, NS4A, NS5A and the mature core protein. Interacts with protease NS2. Interacts with non-structural protein 4A; this interaction stabilizes the folding of NS3 serine protease. NS3-NS4A interaction is essential for NS3 activation and allows membrane anchorage of the latter. NS3/NS4A complex also prevents phosphorylation of host IRF3, thus preventing the establishment of dsRNA induced antiviral state. Interacts with host MAVS; this interaction leads to the cleavage and inhibition of host MAVS. Interacts with host TICAM1; this interaction leads to the cleavage and inhibition of host TICAM1. Interacts with host TANK-binding kinase/TBK1; this interaction results in the inhibition of the association between TBK1 and IRF3, which leads to the inhibition of IRF3 activation. Interacts with host RBM24. Part of the replication complex composed of NS2, NS3, NS4A, NS4B, NS5A and the RNA-directed RNA polymerase embedded in an ER-derived membranous web. Part of the viral assembly initiation complex composed of NS2, E1, E2, NS3, NS4A, NS5A and the mature core protein. In terms of assembly, monomer. Homodimer; dimerization is required for RNA-binding. Interacts with the mature core protein. Interacts with host GRB2. Interacts with host BIN1. Interacts with host PIK3R1. Interacts with host SRCAP. Interacts with host FKBP8. Interacts with host VAPB. Interacts with host EIF2AK2/PKR; this interaction leads to disruption of EIF2AK2 dimerization by NS5A and probably allows the virus to evade the innate immune response. Interacts (via N-terminus) with host PACSIN2 (via N-terminus); this interaction attenuates protein kinase C alpha-mediated phosphorylation of PACSIN2 by disrupting the interaction between PACSIN2 and PRKCA. Interacts (via N-terminus) with host SRC kinase (via SH2 domain). Interacts with most Src-family kinases. Interacts with host IFI27 and SKP2; promotes the ubiquitin-mediated proteasomal degradation of NS5A. Interacts (via N-terminus) with non-structural protein 4A. Interacts with non-structural protein 4B. Interacts with RNA-directed RNA polymerase. Part of the replication complex composed of NS2, NS3, NS4A, NS4B, NS5A and the RNA-directed RNA polymerase embedded in an ER-derived membranous web. Interacts with host GPS2. Interacts with host TNFRSF21; this interaction allows the modulation by the virus of JNK, p38 MAPK, STAT3, and Akt signaling pathways in a DR6-dependent manner. Interacts (via N-terminus) with host CIDEB (via N-terminus); this interaction seems to regulate the association of HCV particles with APOE. Interacts with host CHKA/Choline Kinase-alpha; CHKA bridges host PI4KA and NS5A and potentiates NS5A-stimulated PI4KA activity, which then facilitates the targeting of the ternary complex to the ER for viral replication. Interacts with host SPSB2 (via C-terminus); this interaction targets NS5A for ubiquitination and degradation. Part of the viral assembly initiation complex composed of NS2, E1, E2, NS3, NS4A, NS5A and the mature core protein. It depends on Zn(2+) as a cofactor. The cofactor is Mg(2+). Post-translationally, specific enzymatic cleavages in vivo yield mature proteins. The structural proteins, core, E1, E2 and p7 are produced by proteolytic processing by host signal peptidases. The core protein precursor is synthesized as a 23 kDa, which is retained in the ER membrane through the hydrophobic signal peptide. Cleavage by the signal peptidase releases the 21 kDa mature core protein. The cleavage of the core protein precursor occurs between aminoacids 176 and 188 but the exact cleavage site is not known. Some degraded forms of the core protein appear as well during the course of infection. The other proteins (p7, NS2, NS3, NS4A, NS4B, NS5A and NS5B) are cleaved by the viral proteases. Autoprocessing between NS2 and NS3 is mediated by the NS2 cysteine protease catalytic domain and regulated by the NS3 N-terminal domain. Phosphorylated by host PKC and PKA. In terms of processing, ubiquitinated; mediated by UBE3A and leading to core protein subsequent proteasomal degradation. Post-translationally, highly N-glycosylated. Palmitoylation is required for NS2/3 autoprocessing and E2 recruitment to membranes. In terms of processing, palmitoylated. This modification may play a role in its polymerization or in protein-protein interactions. Post-translationally, cleaved by host caspases which are probably activated by the viral infection. Ubiquitinated. Ubiquitination, most probably at Lys-2350, mediated by host IFI27 and SKP2 leads to proteasomal degradation, restricting viral infection. Ubiquitination by host TRIM22 leads to interruption of viral replication. In terms of processing, phosphorylated on serines in a basal form termed p56. p58 is a hyperphosphorylated form of p56. p56 and p58 coexist in the cell in roughly equivalent amounts. Hyperphosphorylation is dependent on the presence of NS4A. Host CSNK1A1/CKI-alpha or RPS6KB1 kinases may be responsible for NS5A phosphorylation. Post-translationally, tyrosine phosphorylation is essential for the interaction with host SRC. The N-terminus is phosphorylated by host PRK2/PKN2.

Its subcellular location is the host endoplasmic reticulum membrane. It is found in the host mitochondrion membrane. The protein localises to the virion. The protein resides in the host cytoplasm. It localises to the host nucleus. Its subcellular location is the host lipid droplet. It is found in the virion membrane. The protein localises to the host mitochondrion. The protein resides in the host cell membrane. It localises to the host perinuclear region. The enzyme catalyses Hydrolysis of four peptide bonds in the viral precursor polyprotein, commonly with Asp or Glu in the P6 position, Cys or Thr in P1 and Ser or Ala in P1'.. It catalyses the reaction a ribonucleoside 5'-triphosphate + H2O = a ribonucleoside 5'-diphosphate + phosphate + H(+). It carries out the reaction ATP + H2O = ADP + phosphate + H(+). The catalysed reaction is RNA(n) + a ribonucleoside 5'-triphosphate = RNA(n+1) + diphosphate. Inhibited by the antiviral drug hexamethylene amiloride. Inhibition by amantadine appears to be genotype-dependent. Also inhibited by long-alkyl-chain iminosugar derivatives. With respect to regulation, activity is up-regulated by PRK2/PKN2-mediated phosphorylation. Packages viral RNA to form a viral nucleocapsid, and promotes virion budding. Participates in the viral particle production as a result of its interaction with the non-structural protein 5A. Binds RNA and may function as a RNA chaperone to induce the RNA structural rearrangements taking place during virus replication. Modulates viral translation initiation by interacting with viral IRES and 40S ribosomal subunit. Affects various cell signaling pathways, host immunity and lipid metabolism. Prevents the establishment of cellular antiviral state by blocking the interferon-alpha/beta (IFN-alpha/beta) and IFN-gamma signaling pathways and by blocking the formation of phosphorylated STAT1 and promoting ubiquitin-mediated proteasome-dependent degradation of STAT1. Activates STAT3 leading to cellular transformation. Regulates the activity of cellular genes, including c-myc and c-fos. May repress the promoter of p53, and sequester CREB3 and SP110 isoform 3/Sp110b in the cytoplasm. Represses cell cycle negative regulating factor CDKN1A, thereby interrupting an important check point of normal cell cycle regulation. Targets transcription factors involved in the regulation of inflammatory responses and in the immune response: suppresses NF-kappa-B activation, and activates AP-1. Binds to dendritic cells (DCs) via C1QR1, resulting in down-regulation of T-lymphocytes proliferation. Alters lipid metabolism by interacting with hepatocellular proteins involved in lipid accumulation and storage. Induces up-regulation of FAS promoter activity, and thereby contributes to the increased triglyceride accumulation in hepatocytes (steatosis). In terms of biological role, forms a heterodimer with envelope glycoprotein E2, which mediates virus attachment to the host cell, virion internalization through clathrin-dependent endocytosis and fusion with host membrane. Fusion with the host cell is most likely mediated by both E1 and E2, through conformational rearrangements of the heterodimer required for fusion rather than a classical class II fusion mechanism. E1/E2 heterodimer binds host apolipoproteins such as APOB and APOE thereby forming a lipo-viro-particle (LVP). APOE associated to the LVP allows the initial virus attachment to cell surface receptors such as the heparan sulfate proteoglycans (HSPGs), syndecan-1 (SDC1), syndecan-1 (SDC2), the low-density lipoprotein receptor (LDLR) and scavenger receptor class B type I (SCARB1). The cholesterol transfer activity of SCARB1 allows E2 exposure and binding of E2 to SCARB1 and the tetraspanin CD81. E1/E2 heterodimer binding on CD81 activates the epithelial growth factor receptor (EGFR) signaling pathway. Diffusion of the complex E1-E2-EGFR-SCARB1-CD81 to the cell lateral membrane allows further interaction with Claudin 1 (CLDN1) and occludin (OCLN) to finally trigger HCV entry. Its function is as follows. Forms a heterodimer with envelope glycoprotein E1, which mediates virus attachment to the host cell, virion internalization through clathrin-dependent endocytosis and fusion with host membrane. Fusion with the host cell is most likely mediated by both E1 and E2, through conformational rearrangements of the heterodimer required for fusion rather than a classical class II fusion mechanism. The interaction between envelope glycoprotein E2 and host apolipoprotein E/APOE allows the proper assembly, maturation and infectivity of the viral particles. This interaction is probably promoted via the up-regulation of cellular autophagy by the virus. E1/E2 heterodimer binds host apolipoproteins such as APOB and APOE thereby forming a lipo-viro-particle (LVP). APOE associated to the LVP allows the initial virus attachment to cell surface receptors such as the heparan sulfate proteoglycans (HSPGs), syndecan-1 (SDC1), syndecan-1 (SDC2), the low-density lipoprotein receptor (LDLR) and scavenger receptor class B type I (SCARB1). The cholesterol transfer activity of SCARB1 allows E2 exposure and binding of E2 to SCARB1 and the tetraspanin CD81. E1/E2 heterodimer binding on CD81 activates the epithelial growth factor receptor (EGFR) signaling pathway. Diffusion of the complex E1-E2-EGFR-SCARB1-CD81 to the cell lateral membrane allows further interaction with Claudin 1 (CLDN1) and occludin (OCLN) to finally trigger HCV entry. Inhibits host EIF2AK2/PKR activation, preventing the establishment of an antiviral state. Viral ligand for CD209/DC-SIGN and CLEC4M/DC-SIGNR, which are respectively found on dendritic cells (DCs), and on liver sinusoidal endothelial cells and macrophage-like cells of lymph node sinuses. These interactions allow the capture of circulating HCV particles by these cells and subsequent facilitated transmission to permissive cells such as hepatocytes and lymphocyte subpopulations. The interaction between E2 and host amino acid transporter complex formed by SLC3A2 and SLC7A5/LAT1 may facilitate viral entry into host cell. Functionally, ion channel protein that acts as a viroporin and plays an essential role in the assembly, envelopment and secretion of viral particles. Regulates the host cell secretory pathway, which induces the intracellular retention of viral glycoproteins and favors assembly of viral particles. Creates a pore in acidic organelles and releases Ca(2+) and H(+) in the cytoplasm of infected cells, leading to a productive viral infection. High levels of cytoplasmic Ca(2+) may trigger membrane trafficking and transport of viral ER-associated proteins to viroplasms, sites of viral genome replication. This ionic imbalance induces the assembly of the inflammasome complex, which triggers the maturation of pro-IL-1beta into IL-1beta through the action of caspase-1. Targets also host mitochondria and induces mitochondrial depolarization. In addition of its role as a viroporin, acts as a lipid raft adhesion factor. Cysteine protease required for the proteolytic auto-cleavage between the non-structural proteins NS2 and NS3. The N-terminus of NS3 is required for the function of NS2 protease (active region NS2-3). Promotes the initiation of viral particle assembly by mediating the interaction between structural and non-structural proteins. In terms of biological role, displays three enzymatic activities: serine protease with a chymotrypsin-like fold, NTPase and RNA helicase. NS3 serine protease, in association with NS4A, is responsible for the cleavages of NS3-NS4A, NS4A-NS4B, NS4B-NS5A and NS5A-NS5B. The NS3/NS4A complex prevents phosphorylation of host IRF3, thus preventing the establishment of dsRNA induced antiviral state. The NS3/NS4A complex induces host amino acid transporter component SLC3A2, thus contributing to HCV propagation. NS3 RNA helicase binds to RNA and unwinds both dsDNA and dsRNA in the 3' to 5' direction, and likely resolves RNA complicated stable secondary structures in the template strand. Binds a single ATP and catalyzes the unzipping of a single base pair of dsRNA. Inhibits host antiviral proteins TBK1 and IRF3 thereby preventing the establishment of an antiviral state. Cleaves host MAVS/CARDIF thereby preventing the establishment of an antiviral state. Cleaves host TICAM1/TRIF, thereby disrupting TLR3 signaling and preventing the establishment of an antiviral state. Its function is as follows. Peptide cofactor which forms a non-covalent complex with the N-terminal of NS3 serine protease. The NS3/NS4A complex prevents phosphorylation of host IRF3, thus preventing the establishment of dsRNA induced antiviral state. The NS3/NS4A complex induces host amino acid transporter component SLC3A2, thus contributing to HCV propagation. Functionally, induces a specific membrane alteration that serves as a scaffold for the virus replication complex. This membrane alteration gives rise to the so-called ER-derived membranous web that contains the replication complex. NS4B self-interaction contributes to its function in membranous web formation. Promotes host TRIF protein degradation in a CASP8-dependent manner thereby inhibiting host TLR3-mediated interferon signaling. Disrupts the interaction between STING and TBK1 contributing to the inhibition of interferon signaling. Phosphorylated protein that is indispensable for viral replication and assembly. Both hypo- and hyperphosphorylated states are required for the viral life cycle. The hyperphosphorylated form of NS5A is an inhibitor of viral replication. Involved in RNA-binding and especially in binding to the viral genome. Zinc is essential for RNA-binding. Participates in the viral particle production as a result of its interaction with the viral mature core protein. Its interaction with host VAPB may target the viral replication complex to vesicles. Down-regulates viral IRES translation initiation. Mediates interferon resistance, presumably by interacting with and inhibiting host EIF2AK2/PKR. Prevents BIN1-induced apoptosis. Acts as a transcriptional activator of some host genes important for viral replication when localized in the nucleus. Via the interaction with host PACSIN2, modulates lipid droplet formation in order to promote virion assembly. Modulates TNFRSF21/DR6 signaling pathway for viral propagation. In terms of biological role, RNA-dependent RNA polymerase that performs primer-template recognition and RNA synthesis during viral replication. Initiates RNA transcription/replication at a flavin adenine dinucleotide (FAD), resulting in a 5'- FAD cap on viral RNAs. In this way, recognition of viral 5' RNA by host pattern recognition receptors can be bypassed, thereby evading activation of antiviral pathways. The chain is Genome polyprotein from Hepatitis C virus genotype 1b (isolate Con1) (HCV).